The primary structure comprises 178 residues: Large ribosomal subunit protein uL6 (178 aa).

The protein belongs to the universal ribosomal protein uL6 family. In terms of assembly, part of the 50S ribosomal subunit.

This protein binds to the 23S rRNA, and is important in its secondary structure. It is located near the subunit interface in the base of the L7/L12 stalk, and near the tRNA binding site of the peptidyltransferase center. The protein is Large ribosomal subunit protein uL6 of Campylobacter curvus (strain 525.92).